The chain runs to 181 residues: Translation initiation factor IF-3 (181 aa).

Belongs to the IF-3 family. In terms of assembly, monomer.

It localises to the cytoplasm. Functionally, IF-3 binds to the 30S ribosomal subunit and shifts the equilibrium between 70S ribosomes and their 50S and 30S subunits in favor of the free subunits, thus enhancing the availability of 30S subunits on which protein synthesis initiation begins. The sequence is that of Translation initiation factor IF-3 from Pseudoalteromonas translucida (strain TAC 125).